We begin with the raw amino-acid sequence, 266 residues long: Glutamate racemase (266 aa).

Substrate is bound by residues 9–10 and 41–42; these read DS and YG. C72 functions as the Proton donor/acceptor in the catalytic mechanism. Position 73–74 (73–74) interacts with substrate; that stretch reads NT. The Proton donor/acceptor role is filled by C184. 185-186 is a binding site for substrate; sequence TH.

Belongs to the aspartate/glutamate racemases family.

The catalysed reaction is L-glutamate = D-glutamate. It participates in cell wall biogenesis; peptidoglycan biosynthesis. In terms of biological role, provides the (R)-glutamate required for cell wall biosynthesis. The chain is Glutamate racemase from Staphylococcus haemolyticus.